The sequence spans 135 residues: L-alanine exporter AlaE (135 aa).

Helical transmembrane passes span 9 to 29 (VATVIFFTAVATFSELLIAGM), 75 to 95 (DILAFLSFQAPVYGATLLIAG), and 96 to 116 (ASFAEAGTAIGSAIILMILLA).

Belongs to the AlaE exporter family.

It localises to the cell inner membrane. Exports L-alanine. In Cereibacter sphaeroides (strain ATCC 17023 / DSM 158 / JCM 6121 / CCUG 31486 / LMG 2827 / NBRC 12203 / NCIMB 8253 / ATH 2.4.1.) (Rhodobacter sphaeroides), this protein is L-alanine exporter AlaE.